A 467-amino-acid chain; its full sequence is Light-independent protochlorophyllide reductase subunit N (467 aa).

[4Fe-4S] cluster contacts are provided by C23, C48, and C108.

The protein belongs to the BchN/ChlN family. In terms of assembly, protochlorophyllide reductase is composed of three subunits; ChlL, ChlN and ChlB. Forms a heterotetramer of two ChlB and two ChlN subunits. The cofactor is [4Fe-4S] cluster.

The enzyme catalyses chlorophyllide a + oxidized 2[4Fe-4S]-[ferredoxin] + 2 ADP + 2 phosphate = protochlorophyllide a + reduced 2[4Fe-4S]-[ferredoxin] + 2 ATP + 2 H2O. The protein operates within porphyrin-containing compound metabolism; chlorophyll biosynthesis (light-independent). Component of the dark-operative protochlorophyllide reductase (DPOR) that uses Mg-ATP and reduced ferredoxin to reduce ring D of protochlorophyllide (Pchlide) to form chlorophyllide a (Chlide). This reaction is light-independent. The NB-protein (ChlN-ChlB) is the catalytic component of the complex. In Trichormus variabilis (strain ATCC 29413 / PCC 7937) (Anabaena variabilis), this protein is Light-independent protochlorophyllide reductase subunit N.